Reading from the N-terminus, the 333-residue chain is Large ribosomal subunit protein mL39 (333 aa).

A TGS domain is found at aspartate 56–asparagine 122. The segment at serine 311–serine 333 is disordered.

It belongs to the mitochondrion-specific ribosomal protein mL39 family. In terms of assembly, component of the mitochondrial ribosome large subunit (39S) which comprises a 16S rRNA and about 50 distinct proteins.

Its subcellular location is the mitochondrion. The protein is Large ribosomal subunit protein mL39 (mRpL39) of Drosophila melanogaster (Fruit fly).